The primary structure comprises 207 residues: UPF0126 inner membrane protein YadS (207 aa).

The chain crosses the membrane as a helical span at residues 1 to 21 (MLVYWLDIVGTAVFAISGVLL). Over 22-29 (AGKLRMDP) the chain is Cytoplasmic. Residues 30–50 (FGVLVLGVVTAVGGGTIRDMA) traverse the membrane as a helical segment. Topologically, residues 51–58 (LDHGPVFW) are periplasmic. The chain crosses the membrane as a helical span at residues 59-79 (VKDPTDLVVAMVTSMLTIVLV). Residues 80–85 (RQPRRL) lie on the Cytoplasmic side of the membrane. Residues 86–106 (PKWMLPVLDAVGLAVFVGIGV) traverse the membrane as a helical segment. The Periplasmic portion of the chain corresponds to 107–112 (NKAFNA). The chain crosses the membrane as a helical span at residues 113 to 133 (EAGPLIAVCMGVITGVGGGII). Over 134 to 148 (RDVLAREIPMILRTE) the chain is Cytoplasmic. A helical membrane pass occupies residues 149-169 (IYATACIIGGIVHATAYYTFS). A topological domain (periplasmic) is located at residue valine 170. The helical transmembrane segment at 171–191 (PLETASMMGMVVTLLIRLAAI) threads the bilayer. At 192–207 (RWHLKLPTFALDENGR) the chain is on the cytoplasmic side.

It belongs to the UPF0126 family.

It is found in the cell inner membrane. The sequence is that of UPF0126 inner membrane protein YadS (yadS) from Escherichia coli O6:H1 (strain CFT073 / ATCC 700928 / UPEC).